The sequence spans 154 residues: Phosphopantetheine adenylyltransferase (154 aa).

Belongs to the eukaryotic CoaD family.

The protein localises to the cytoplasm. The enzyme catalyses (R)-4'-phosphopantetheine + ATP + H(+) = 3'-dephospho-CoA + diphosphate. It functions in the pathway cofactor biosynthesis; coenzyme A biosynthesis. Its function is as follows. Reversibly transfers an adenylyl group from ATP to 4'-phosphopantetheine, yielding dephospho-CoA (dPCoA) and pyrophosphate. The sequence is that of Phosphopantetheine adenylyltransferase from Methanosarcina mazei (strain ATCC BAA-159 / DSM 3647 / Goe1 / Go1 / JCM 11833 / OCM 88) (Methanosarcina frisia).